We begin with the raw amino-acid sequence, 478 residues long: MSKEIKTQVVVLGAGPAGYSAAFRCADLGLETVIVERYSTLGGVCLNVGCIPSKALLHVAKVIEEAKHANKNGIYFSEPRIELDEVRAGKEAVVAKLTGGLAGMAKARKVTVVEGLATFTDSHTLVARDRDGNPTTVKFDNAIIAAGSRPVQLPFIPHEDPRIWDSTDALKLKEVPKKLLIMGGGIIGLEMGTVYNALGSEVEVVEMFDQVIPAADKDVVGIYTKQVEKKFKLMLETKVTAVEAKDDGIYVSMEGKACNDTKRYDAVLVAIGRVPNGKLIDAGKAGVEVDDRGFIHVDKQMRTNVPHIYAIGDIVGQPMLAHKGVHEGHVAAEVIAGQKHYFDPKVIPSIAYTEPEVAWVGKTEKECKQEGLNYEVAKFPWAASGRAIASECSEGMTKLIFDKDTHRVLGGAIVGSNGGELLGEIGLAIEMGCDAEDIALTIHAHPTLHESVGLAAEVFEGSITDLPNAKAKEKIISI.

FAD is bound by residues 36-45 (ERYSTLGGVC), Lys-54, and Ala-117. Cys-45 and Cys-50 are joined by a disulfide. NAD(+) contacts are provided by residues 183–187 (GGGII), Glu-206, Val-239, and 270–273 (AIGR). FAD contacts are provided by Asp-313 and Ala-321. The Proton acceptor role is filled by His-445.

This sequence belongs to the class-I pyridine nucleotide-disulfide oxidoreductase family. In terms of assembly, homodimer. FAD is required as a cofactor.

The protein resides in the cytoplasm. The enzyme catalyses N(6)-[(R)-dihydrolipoyl]-L-lysyl-[protein] + NAD(+) = N(6)-[(R)-lipoyl]-L-lysyl-[protein] + NADH + H(+). Functionally, lipoamide dehydrogenase is a component of the alpha-ketoacid dehydrogenase complexes. The polypeptide is Dihydrolipoyl dehydrogenase (lpdA) (Haemophilus influenzae (strain ATCC 51907 / DSM 11121 / KW20 / Rd)).